A 437-amino-acid chain; its full sequence is uncharacterized protein (437 aa).

Basic residues-rich tracts occupy residues 1–29 (MDTP…RHRN), 81–91 (LRGRHPRVRRV), and 101–118 (RRRH…GRNR). 2 disordered regions span residues 1–31 (MDTP…RNDH) and 77–437 (EHVP…QGTR). A compositionally biased stretch (basic and acidic residues) spans 119 to 132 (HAGDRRAPGVDSRL). A compositionally biased stretch (basic residues) spans 133-142 (RQQHQHPRGR). A compositionally biased stretch (basic and acidic residues) spans 143-164 (HASDRVQDGAHPRRQRLREQPR). Basic residues predominate over residues 165–190 (HAGRPRRRQPPRRGRSRGTHRRHLRQ). Composition is skewed to basic and acidic residues over residues 198–209 (GPDEDQAREFRG) and 217–253 (HPPT…EAGR). 2 stretches are compositionally biased toward basic residues: residues 284–293 (TVHRGGRLRG) and 324–348 (PHSR…RVRH). Over residues 371–382 (DAAAYASVPAHA) the composition is skewed to low complexity.

This is an uncharacterized protein from Haloferax lucentense (strain DSM 14919 / JCM 9276 / NCIMB 13854 / Aa 2.2) (Haloferax alicantei).